A 580-amino-acid chain; its full sequence is Glypican-3 (580 aa).

Positions 1–24 are cleaved as a signal peptide; sequence MAGTVRTACLVVAMLLSLDFPGQA. Pyrrolidone carboxylic acid is present on Gln-25. Cystine bridges form between Cys-35–Cys-72, Cys-65–Cys-262, Cys-73–Cys-265, Cys-197–Cys-349, Cys-252–Cys-285, Cys-274–Cys-422, and Cys-278–Cys-410. N-linked (GlcNAc...) asparagine glycans are attached at residues Asn-124 and Asn-241. Residue Ser-352 is modified to Phosphoserine. Asn-418 carries an N-linked (GlcNAc...) asparagine glycan. Ser-495 and Ser-509 each carry an O-linked (Xyl...) (glycosaminoglycan) serine glycan. Asn-554 carries the GPI-anchor amidated asparagine lipid modification. A propeptide spans 555 to 580 (removed in mature form); sequence LGNVHSPLKLLTSMAISVVCFFFLVH.

It belongs to the glypican family. Heterodimer; disulfide-linked. Cleavage by a furin-like convertase results in production of alpha and beta chains which form a disulfide-linked heterodimer. Interacts with DPP4. Interacts with FGF2. Interacts with WNT5A. Also interacts with WNT3A and WNT7B. Interacts with hedgehog protein SHH; the heparan sulfate chains are not required for the interaction. Also interacts with hedgehog protein IHH. Interacts with CD81. Interacts with Wnt receptors FZD4, FZD7 and FZD8; the heparan sulfate chains are required for the interaction. O-glycosylated; contains heparan sulfate and/or chondroitin sulfate. Post-translationally, cleaved intracellularly by a furin-like convertase to generate 2 subunits, alpha and beta, which remain associated through disulfide bonds and are associated with the cell surface via the GPI-anchor. This processing is essential for its role in inhibition of hedgehog signaling. A second proteolytic event may result in cleavage of the protein on the cell surface, separating it from the GPI-anchor and leading to its shedding from the cell surface.

The protein resides in the cell membrane. Its function is as follows. Cell surface proteoglycan. Negatively regulates the hedgehog signaling pathway when attached via the GPI-anchor to the cell surface by competing with the hedgehog receptor PTC1 for binding to hedgehog proteins. Binding to the hedgehog protein SHH triggers internalization of the complex by endocytosis and its subsequent lysosomal degradation. Positively regulates the canonical Wnt signaling pathway by binding to the Wnt receptor Frizzled and stimulating the binding of the Frizzled receptor to Wnt ligands. Positively regulates the non-canonical Wnt signaling pathway. Binds to CD81 which decreases the availability of free CD81 for binding to the transcriptional repressor HHEX, resulting in nuclear translocation of HHEX and transcriptional repression. Inhibits the dipeptidyl peptidase activity of DPP4. Plays a role in limb patterning and skeletal development by controlling the cellular response to BMP4. Modulates the effects of growth factors BMP2, BMP7 and FGF7 on renal branching morphogenesis. Required for coronary vascular development. Plays a role in regulating cell movements during gastrulation. The protein is Glypican-3 (GPC3) of Pan troglodytes (Chimpanzee).